The primary structure comprises 251 residues: Hydroxyacylglutathione hydrolase (251 aa).

7 residues coordinate Zn(2+): His-53, His-55, Asp-57, His-58, His-110, Asp-127, and His-165.

Belongs to the metallo-beta-lactamase superfamily. Glyoxalase II family. As to quaternary structure, monomer. The cofactor is Zn(2+).

The enzyme catalyses an S-(2-hydroxyacyl)glutathione + H2O = a 2-hydroxy carboxylate + glutathione + H(+). It participates in secondary metabolite metabolism; methylglyoxal degradation; (R)-lactate from methylglyoxal: step 2/2. Functionally, thiolesterase that catalyzes the hydrolysis of S-D-lactoyl-glutathione to form glutathione and D-lactic acid. The polypeptide is Hydroxyacylglutathione hydrolase (Escherichia coli (strain 55989 / EAEC)).